The primary structure comprises 652 residues: MRPLSHLSFFNGLLLGLSALSAATSVVHERREATSSNWVKRARVNPSDKHVVRIGLTQSSLEEAHDLLMDVSNPSSPNYARFYSADEVAAKFAPSTETVNEVQNWLTEKGINASRVAQTQNHGWLVFHATSKEIENLFDTTYYEYHNRKTGKKAIACEQYHVPASVQKHIDYVHPGVNLNPSSGKPSSIRRRAAASKKTKLPARGPRPIQQHDVKGLNVTNCDQLITPECIRALYKIPSARAAPHPNNSLGIFEEGDYYAQEDLDLFFKTFAKDIPQGTHPIPAFIDGAEAPVPVTKAGGESDLDFELAYPIVHPQSITLYQTDDANWASNTTGFLNTFLDALDGSYCTYCAYGECGNDPSLDPVYPDDAGYDGQLMCGVFKPTNVISVSYGEQENDLPANYQQRQCMEFLKLGLQGVSVLFASGDNGVAGPPGDGNSVNGCLNNGTVFSPAFPNSCPYITNVGATKVYPGYTVSQPESAVYDPDGLYSYASGGGFSNIYPIPDYQAEAVATYFKDHNPPYPYYEGAENLGKNGGLYNRLGRGYPDVAANGDNIAVFNGGEFGSSGGTSASTPIFASIINRIIDERLAVGKGPVGFINPVLYKNPSVLNDITNGTNPGCGTDGFSTAPGWDPATGLGTPNYPKMLKLWLDLP.

Positions 1–22 (MRPLSHLSFFNGLLLGLSALSA) are cleaved as a signal peptide. Positions 23 to 215 (ATSVVHERRE…PRPIQQHDVK (193 aa)) are cleaved as a propeptide — removed in mature form. An N-linked (GlcNAc...) asparagine glycan is attached at Asn-112. Residues 177–211 (VNLNPSSGKPSSIRRRAAASKKTKLPARGPRPIQQ) form a disordered region. A compositionally biased stretch (basic residues) spans 188 to 201 (SIRRRAAASKKTKL). N-linked (GlcNAc...) asparagine glycosylation is found at Asn-218 and Asn-247. The Peptidase S53 domain maps to 225 to 651 (LITPECIRAL…PKMLKLWLDL (427 aa)). Active-site charge relay system residues include Glu-301 and Asp-305. Residues Asn-331 and Asn-445 are each glycosylated (N-linked (GlcNAc...) asparagine). The Charge relay system role is filled by Ser-569. Positions 610 and 611 each coordinate Ca(2+). Asn-613 is a glycosylation site (N-linked (GlcNAc...) asparagine). 2 residues coordinate Ca(2+): Gly-629 and Asp-631.

Requires Ca(2+) as cofactor. In terms of processing, N-glycosylated. Post-translationally, O-glycosylated.

It is found in the secreted. Its subcellular location is the extracellular space. Its activity is regulated as follows. Inhibited by antipain and leupeptin. Its function is as follows. Serine endopeptidase which hydrolyzes a range of fluorogenic peptide substrates containing the basic residues arginine or lysine at the P1 position and prefers paired basic resides. Also hydrolyzes clupeine and salmine, activates plasminogen and converts trypsinogen to trypsin. The protein is Aorsin of Aspergillus oryzae (strain ATCC 42149 / RIB 40) (Yellow koji mold).